The primary structure comprises 459 residues: MNRLPSSASALACSAHALNLIEKRTLDHEEMKALNREVIEYFKEHVNPGFLEYRKSVTAGGDYGAVEWQAGGLNTLVDTQGQEFIDCLGGFGIFNVGHRNPVVVSAVQNQLAKQPLHSQELLDPLRAMLAKTLAALTPGKLKYSFFCNSGTESVEAALKLAKAYQSPRGKFTFIATSGAFHGKSLGALSATAKSTFRKPFMPLLPGFRHVPFGNIEAMRTALSECKKTGDDVAAVILEPIQGEGGVILPPPGYLTAVRKLCDEFGALMILDEVQTGMGRTGKMFACEHENVQPDILCLAKALGGGVMPIGATIATEEVFSVLFDNPFLHTTTFGGNPLACAAALATINVLLEQNLPAQAEQKGDMLLDGFRQLAREYPDLVQEARGKGMLMAIEFVDNEIGYNFASEMFRQRVLVAGTLNNAKTIRIEPPLTLTIEQCEQVIKAARKALAAIRVSVEEA.

Pyridoxal 5'-phosphate contacts are provided by residues 150–151 (GT) and Q274. K300 bears the N6-(pyridoxal phosphate)lysine mark. T332 is a pyridoxal 5'-phosphate binding site.

Belongs to the class-III pyridoxal-phosphate-dependent aminotransferase family. Putrescine aminotransferase subfamily. It depends on pyridoxal 5'-phosphate as a cofactor.

The catalysed reaction is an alkane-alpha,omega-diamine + 2-oxoglutarate = an omega-aminoaldehyde + L-glutamate. It carries out the reaction putrescine + 2-oxoglutarate = 1-pyrroline + L-glutamate + H2O. The enzyme catalyses cadaverine + 2-oxoglutarate = 5-aminopentanal + L-glutamate. It functions in the pathway amine and polyamine degradation; putrescine degradation; 4-aminobutanal from putrescine (transaminase route): step 1/1. In terms of biological role, catalyzes the aminotransferase reaction from putrescine to 2-oxoglutarate, leading to glutamate and 4-aminobutanal, which spontaneously cyclizes to form 1-pyrroline. This is the first step in one of two pathways for putrescine degradation, where putrescine is converted into 4-aminobutanoate (gamma-aminobutyrate or GABA) via 4-aminobutanal. Also functions as a cadaverine transaminase in a a L-lysine degradation pathway to succinate that proceeds via cadaverine, glutarate and L-2-hydroxyglutarate. This is Putrescine aminotransferase from Escherichia coli (strain SMS-3-5 / SECEC).